The sequence spans 553 residues: Arginine--tRNA ligase (553 aa).

The short motif at Pro-132–His-140 is the 'HIGH' region element.

It belongs to the class-I aminoacyl-tRNA synthetase family. In terms of assembly, monomer.

The protein localises to the cytoplasm. It catalyses the reaction tRNA(Arg) + L-arginine + ATP = L-arginyl-tRNA(Arg) + AMP + diphosphate. In Staphylococcus aureus (strain N315), this protein is Arginine--tRNA ligase.